The sequence spans 444 residues: UDP-N-acetylmuramate--L-alanine ligase (444 aa).

110-116 (GAHGKTS) provides a ligand contact to ATP.

Belongs to the MurCDEF family.

The protein localises to the cytoplasm. The enzyme catalyses UDP-N-acetyl-alpha-D-muramate + L-alanine + ATP = UDP-N-acetyl-alpha-D-muramoyl-L-alanine + ADP + phosphate + H(+). Its pathway is cell wall biogenesis; peptidoglycan biosynthesis. Functionally, cell wall formation. This Streptococcus pneumoniae (strain P1031) protein is UDP-N-acetylmuramate--L-alanine ligase.